A 333-amino-acid chain; its full sequence is Mycothiol acetyltransferase (333 aa).

2 consecutive N-acetyltransferase domains span residues 18-170 (PTLS…LPEP) and 176-333 (VTVR…AAAD). A 1D-myo-inositol 2-(L-cysteinylamino)-2-deoxy-alpha-D-glucopyranoside-binding site is contributed by Glu46. 98–100 (IVV) contacts acetyl-CoA. Residues Glu203, Lys242, and Glu261 each contribute to the 1D-myo-inositol 2-(L-cysteinylamino)-2-deoxy-alpha-D-glucopyranoside site. Acetyl-CoA contacts are provided by residues 265–267 (VGV) and 272–278 (GGAGLGR). Tyr299 serves as a coordination point for 1D-myo-inositol 2-(L-cysteinylamino)-2-deoxy-alpha-D-glucopyranoside. 304-309 (NERAVR) is an acetyl-CoA binding site.

The protein belongs to the acetyltransferase family. MshD subfamily. As to quaternary structure, monomer.

The catalysed reaction is 1D-myo-inositol 2-(L-cysteinylamino)-2-deoxy-alpha-D-glucopyranoside + acetyl-CoA = mycothiol + CoA + H(+). In terms of biological role, catalyzes the transfer of acetyl from acetyl-CoA to desacetylmycothiol (Cys-GlcN-Ins) to form mycothiol. This chain is Mycothiol acetyltransferase, found in Frankia alni (strain DSM 45986 / CECT 9034 / ACN14a).